A 224-amino-acid polypeptide reads, in one-letter code: Ribosomal RNA small subunit methyltransferase G (224 aa).

S-adenosyl-L-methionine is bound by residues G92, L97, 143-144 (VE), and R156.

Belongs to the methyltransferase superfamily. RNA methyltransferase RsmG family.

Its subcellular location is the cytoplasm. It catalyses the reaction guanosine(527) in 16S rRNA + S-adenosyl-L-methionine = N(7)-methylguanosine(527) in 16S rRNA + S-adenosyl-L-homocysteine. Specifically methylates the N7 position of guanine in position 527 of 16S rRNA. The chain is Ribosomal RNA small subunit methyltransferase G from Albidiferax ferrireducens (strain ATCC BAA-621 / DSM 15236 / T118) (Rhodoferax ferrireducens).